Reading from the N-terminus, the 67-residue chain is Conotoxin Lt5.9 (67 aa).

The signal sequence occupies residues 1-19 (MLCLPVFIILLLLASPAAP). The propeptide occupies 20-46 (KSFETKVQSDLTRTDGNMETEENLGEV).

It belongs to the conotoxin T superfamily. Contains 2 disulfide bonds that can be either 'C1-C3, C2-C4' or 'C1-C4, C2-C3', since these disulfide connectivities have been observed for conotoxins with cysteine framework V (for examples, see AC P0DQQ7 and AC P81755). As to expression, expressed by the venom duct.

Its subcellular location is the secreted. The protein is Conotoxin Lt5.9 of Conus litteratus (Lettered cone).